The sequence spans 1634 residues: Probable serine/threonine-protein kinase DDB_G0282895 (1634 aa).

An MORN 1 repeat occupies tyrosine 40–tyrosine 63. The interval glutamine 84–asparagine 131 is disordered. Positions lysine 89–proline 109 are enriched in low complexity. A compositionally biased stretch (polar residues) spans isoleucine 110–glutamine 119. A compositionally biased stretch (low complexity) spans asparagine 120–asparagine 131. The MORN 2 repeat unit spans residues tyrosine 169–serine 191. Low complexity-rich tracts occupy residues serine 273–threonine 292 and serine 318–serine 339. 3 disordered regions span residues serine 273–glutamine 367, threonine 658–valine 750, and serine 783–glutamine 816. The span at glycine 340–serine 351 shows a compositional bias: polar residues. Composition is skewed to low complexity over residues glutamine 352–glutamine 367, threonine 658–threonine 688, and proline 703–serine 715. Residues aspartate 716–serine 732 are compositionally biased toward polar residues. The span at asparagine 787–asparagine 813 shows a compositional bias: low complexity. A helical transmembrane segment spans residues isoleucine 1255–tyrosine 1275. The Protein kinase domain maps to leucine 1377–cysteine 1634. Residues leucine 1383–valine 1391 and lysine 1404 each bind ATP. Aspartate 1500 (proton acceptor) is an active-site residue.

The protein belongs to the protein kinase superfamily. TKL Ser/Thr protein kinase family.

The protein resides in the membrane. It carries out the reaction L-seryl-[protein] + ATP = O-phospho-L-seryl-[protein] + ADP + H(+). The catalysed reaction is L-threonyl-[protein] + ATP = O-phospho-L-threonyl-[protein] + ADP + H(+). The chain is Probable serine/threonine-protein kinase DDB_G0282895 from Dictyostelium discoideum (Social amoeba).